The sequence spans 1195 residues: ATP-dependent DNA helicase Hel308 (1195 aa).

ATP is bound by residues glutamine 20 and 39 to 46 (IPTASGKT). In terms of domain architecture, Helicase ATP-binding spans 26 to 196 (RGLLDKNKNF…WLNAELIVDD (171 aa)). A DEAH box motif is present at residues 143-146 (DEIH). One can recognise a DOD-type homing endonuclease domain in the interval 451–584 (FIGYFIGDGY…LQFVLLRFGI (134 aa)).

Belongs to the helicase family. Hel308 subfamily. In terms of assembly, monomer. In terms of processing, this protein undergoes a protein self splicing that involves a post-translational excision of the intervening region (intein) followed by peptide ligation.

It catalyses the reaction Couples ATP hydrolysis with the unwinding of duplex DNA by translocating in the 3'-5' direction.. It carries out the reaction ATP + H2O = ADP + phosphate + H(+). In terms of biological role, DNA-dependent ATPase and 3'-5' DNA helicase that may be involved in repair of stalled replication forks. The protein is ATP-dependent DNA helicase Hel308 of Methanocaldococcus jannaschii (strain ATCC 43067 / DSM 2661 / JAL-1 / JCM 10045 / NBRC 100440) (Methanococcus jannaschii).